Reading from the N-terminus, the 288-residue chain is ATP synthase gamma chain (288 aa).

This sequence belongs to the ATPase gamma chain family. F-type ATPases have 2 components, CF(1) - the catalytic core - and CF(0) - the membrane proton channel. CF(1) has five subunits: alpha(3), beta(3), gamma(1), delta(1), epsilon(1). CF(0) has three main subunits: a, b and c.

The protein localises to the cell inner membrane. Its function is as follows. Produces ATP from ADP in the presence of a proton gradient across the membrane. The gamma chain is believed to be important in regulating ATPase activity and the flow of protons through the CF(0) complex. The chain is ATP synthase gamma chain from Glaesserella parasuis serovar 5 (strain SH0165) (Haemophilus parasuis).